The primary structure comprises 43 residues: Omega-agatoxin-Aa3c (43 aa).

Disulfide bonds link Cys2–Cys19, Cys9–Cys25, and Cys27–Cys38.

Belongs to the neurotoxin 04 (omega-agtx) family. 03 (type II/III omega-agtx) subfamily. In terms of tissue distribution, expressed by the venom gland.

The protein resides in the secreted. Omega-agatoxins are antagonists of voltage-gated calcium channels (Cav). The sequence is that of Omega-agatoxin-Aa3c from Agelenopsis aperta (North American funnel-web spider).